The primary structure comprises 63 residues: MAVQQNKKSRSRRDMRRSHDALTKPTLSVDPTTGETHLRHHMTPDGYYRGKKIIDAETAYEQE.

Positions 1–45 are disordered; sequence MAVQQNKKSRSRRDMRRSHDALTKPTLSVDPTTGETHLRHHMTPD. Positions 7–16 are enriched in basic residues; it reads KKSRSRRDMR. Residues 25 to 35 are compositionally biased toward polar residues; sequence PTLSVDPTTGE.

This sequence belongs to the bacterial ribosomal protein bL32 family.

The sequence is that of Large ribosomal subunit protein bL32 from Legionella pneumophila (strain Paris).